The primary structure comprises 350 residues: ATP-dependent (S)-NAD(P)H-hydrate dehydratase (350 aa).

In terms of domain architecture, YjeF C-terminal spans 35–342; the sequence is LMQSVKRIIP…PEVGRAYEEL (308 aa). Residues glycine 139 and 192-198 each bind (6S)-NADPHX; that span reads NVAEFGR. Residues 230–234 and 249–258 contribute to the ATP site; these read KGPVD and GGLKRCGGQG. Residue aspartate 259 participates in (6S)-NADPHX binding.

The protein belongs to the NnrD/CARKD family. Requires Mg(2+) as cofactor.

It localises to the cytoplasm. It carries out the reaction (6S)-NADHX + ATP = ADP + phosphate + NADH + H(+). It catalyses the reaction (6S)-NADPHX + ATP = ADP + phosphate + NADPH + H(+). Functionally, catalyzes the dehydration of the S-form of NAD(P)HX at the expense of ATP, which is converted to ADP. Together with NAD(P)HX epimerase, which catalyzes the epimerization of the S- and R-forms, the enzyme allows the repair of both epimers of NAD(P)HX, a damaged form of NAD(P)H that is a result of enzymatic or heat-dependent hydration. This is ATP-dependent (S)-NAD(P)H-hydrate dehydratase from Mycosarcoma maydis (Corn smut fungus).